The chain runs to 291 residues: Flavonol synthase/flavanone 3-hydroxylase (291 aa).

A Fe2OG dioxygenase domain is found at 151-250 (CWYVMNINHY…RMSWPVLVSP (100 aa)). Fe cation-binding residues include histidine 175, aspartate 177, and histidine 231.

This sequence belongs to the iron/ascorbate-dependent oxidoreductase family. L-ascorbate is required as a cofactor. Fe cation serves as cofactor.

The protein localises to the cytoplasm. The enzyme catalyses a (2R,3R)-dihydroflavonol + 2-oxoglutarate + O2 = a flavonol + succinate + CO2 + H2O. It catalyses the reaction a (2S)-flavan-4-one + 2-oxoglutarate + O2 = a (2R,3R)-dihydroflavonol + succinate + CO2. It participates in secondary metabolite biosynthesis; flavonoid biosynthesis. Functionally, catalyzes the formation of flavonols from dihydroflavonols. It can act on dihydrokaempferol to produce kaempferol, on dihydroquercetin to produce quercitin and on dihydromyricetin to produce myricetin. This Matthiola incana (Common stock) protein is Flavonol synthase/flavanone 3-hydroxylase.